A 701-amino-acid polypeptide reads, in one-letter code: Glycine--tRNA ligase beta subunit (701 aa).

The protein belongs to the class-II aminoacyl-tRNA synthetase family. In terms of assembly, tetramer of two alpha and two beta subunits.

Its subcellular location is the cytoplasm. The enzyme catalyses tRNA(Gly) + glycine + ATP = glycyl-tRNA(Gly) + AMP + diphosphate. The chain is Glycine--tRNA ligase beta subunit from Helicobacter pylori (strain HPAG1).